A 463-amino-acid polypeptide reads, in one-letter code: MAASVFYGRLLAVATLRNHRPRTALGAAAQVLGSSGLFNNHGLQVQQQQQRNLSLHEYMSMELLQEAGVSIPKGCVAKSPDEAYAVAKKLGSKDVVIKAQVLAGGRGKGTFESGLKGGVKIVFSPEEAKAVSSQMIGKKLFTKQTGEKGRICNQVLVCERKYPRREYYFAITMERSFQGPVLIGSSQGGVNIEDVAAETPEAIITEPIDIEEGIKKEQALQLAQKMGFPPNIVESAAENMVKLYSLFLKYDATMIEINPMVEDSDGAVLCMDAKINFDSNSAYRQKKIFDLQDWTQEDERDKDAAQANLNYIGLDGNIGCLVNGAGLAMATMDIIKLHGGTPANFLDVGGGATVHQVTEAFKLITSDKKVLAILVNIFGGIMSCDVIAQGIVTALKDLEIKIPVVVRLQGTRVDDAKALIAGSGLKILACDDLDEAARMVVKLSEIVTLAKQAHVDVKFQLPI.

The N-terminal 53 residues, 1-53 (MAASVFYGRLLAVATLRNHRPRTALGAAAQVLGSSGLFNNHGLQVQQQQQRNL), are a transit peptide targeting the mitochondrion. Residues 61 to 288 (MELLQEAGVS…SNSAYRQKKI (228 aa)) form the ATP-grasp domain. K78 carries the post-translational modification N6-acetyllysine. Y84 carries the post-translational modification Phosphotyrosine. K88 is modified (N6-acetyllysine; alternate). Residue K88 is modified to N6-succinyllysine; alternate. Residues K98 and 105-107 (GRG) each bind ATP. N6-acetyllysine occurs at positions 129, 139, 143, and 216. Mg(2+) is bound by residues N258 and D272. S279 bears the Phosphoserine mark. Residue N323 coordinates substrate. The residue at position 341 (T341) is a Phosphothreonine. K368 is modified (N6-acetyllysine). 380–382 (GIM) serves as a coordination point for substrate.

The protein belongs to the succinate/malate CoA ligase beta subunit family. ATP-specific subunit beta subfamily. In terms of assembly, heterodimer of an alpha and a beta subunit. The beta subunit determines specificity for ATP. Interacts with ALAS2. Requires Mg(2+) as cofactor.

Its subcellular location is the mitochondrion. It catalyses the reaction succinate + ATP + CoA = succinyl-CoA + ADP + phosphate. Its pathway is carbohydrate metabolism; tricarboxylic acid cycle; succinate from succinyl-CoA (ligase route): step 1/1. In terms of biological role, ATP-specific succinyl-CoA synthetase functions in the citric acid cycle (TCA), coupling the hydrolysis of succinyl-CoA to the synthesis of ATP and thus represents the only step of substrate-level phosphorylation in the TCA. The beta subunit provides nucleotide specificity of the enzyme and binds the substrate succinate, while the binding sites for coenzyme A and phosphate are found in the alpha subunit. The sequence is that of Succinate--CoA ligase [ADP-forming] subunit beta, mitochondrial from Macaca fascicularis (Crab-eating macaque).